Consider the following 161-residue polypeptide: Nucleotide-binding protein Nmul_A1044 (161 aa).

The protein belongs to the YajQ family.

In terms of biological role, nucleotide-binding protein. This is Nucleotide-binding protein Nmul_A1044 from Nitrosospira multiformis (strain ATCC 25196 / NCIMB 11849 / C 71).